The chain runs to 634 residues: MDNSSDEESEISESEIDVYYEKPYEKLMNGDYKVKVKDTFRCPFCAGKKKQHYKYKELLAHASGVAKGSASRSAKQKANHFALAKYMENELAGDADVPRPQIPSSSTEQSQAVVDDIYVWPWMGIVINPVRRTDNKNVLLDSAYWLKKLARFNPLEVKTLWLDQESVVAVIPQFNSGWSGFKSVTELEKEYEIRGCGRKDWIDKRGDWRSKAYGWCARADDYNSQGSIAEYLSKVGKLRSFSDITKEEIQNKSIVVDDLANKIAMTNEDLNKLQYMNNEKTLSLRRVLIEKDELDRVYKQETKKMQELSREKINRIFREKERLTNELEAKMNNLKIWSKQLDKKQALTELERQKLDEDKKKSDVMNSSLQLASLEQKKTDDRVLRLVDEHKRKKEETLNKILQLEKELDSKQKLQMEIQELKGKLKVMKHEDEDDEGIKKKMKKMKEELEEKCSELQDLEDTNSALMVKERKSNDEIVEARKFLITELRELVSDRNIIRVKRMGELEEKPFMTACRQRCTVEEEAQVQYAMLCSKWQEKVKDSAWQPFKHVGTGDRKKEVVDEEDEEIKKLREEWGEEVKNAVKTALEELNEFNPSGRYSVPELWNSKQGRKATLKEVIDYITQQVKTLKRRRA.

The stretch at 254–469 (IVVDDLANKI…EDTNSALMVK (216 aa)) forms a coiled coil.

Functionally, acts in association with FDM3 and FDM4 for RNA-directed DNA methylation (RdDM). This Arabidopsis thaliana (Mouse-ear cress) protein is Factor of DNA methylation 5.